The chain runs to 466 residues: Trigger factor (466 aa).

In terms of domain architecture, PPIase FKBP-type spans 162 to 243; that stretch reads GDVVSIDLSA…VRSVKERELP (82 aa). A disordered region spans residues 428 to 466; sequence GNTIDTSEFFGKRVSAGEAEEAEPADEGAARAASDEATT. A compositionally biased stretch (low complexity) spans 457-466; the sequence is ARAASDEATT.

It belongs to the FKBP-type PPIase family. Tig subfamily.

The protein localises to the cytoplasm. It carries out the reaction [protein]-peptidylproline (omega=180) = [protein]-peptidylproline (omega=0). Functionally, involved in protein export. Acts as a chaperone by maintaining the newly synthesized protein in an open conformation. Functions as a peptidyl-prolyl cis-trans isomerase. The protein is Trigger factor of Mycobacterium bovis (strain BCG / Tokyo 172 / ATCC 35737 / TMC 1019).